The sequence spans 176 residues: Large ribosomal subunit protein uL22 (176 aa).

The disordered stretch occupies residues V113–D176. Residues S136 to A152 show a composition bias toward low complexity. Over residues T159–D176 the composition is skewed to basic and acidic residues.

This sequence belongs to the universal ribosomal protein uL22 family. In terms of assembly, part of the 50S ribosomal subunit.

Functionally, this protein binds specifically to 23S rRNA; its binding is stimulated by other ribosomal proteins, e.g. L4, L17, and L20. It is important during the early stages of 50S assembly. It makes multiple contacts with different domains of the 23S rRNA in the assembled 50S subunit and ribosome. Its function is as follows. The globular domain of the protein is located near the polypeptide exit tunnel on the outside of the subunit, while an extended beta-hairpin is found that lines the wall of the exit tunnel in the center of the 70S ribosome. This is Large ribosomal subunit protein uL22 from Mycobacterium ulcerans (strain Agy99).